The primary structure comprises 330 residues: Tryptophan--tRNA ligase (330 aa).

Residues 10–12 and 18–19 contribute to the ATP site; these read QTT and GN. The 'HIGH' region motif lies at 11 to 19; that stretch reads TTGALHLGN. Aspartate 134 provides a ligand contact to L-tryptophan. ATP-binding positions include 146–148, isoleucine 186, and 195–199; these read GED and KMSKS. Residues 195 to 199 carry the 'KMSKS' region motif; sequence KMSKS.

The protein belongs to the class-I aminoacyl-tRNA synthetase family. Homodimer.

It is found in the cytoplasm. It catalyses the reaction tRNA(Trp) + L-tryptophan + ATP = L-tryptophyl-tRNA(Trp) + AMP + diphosphate + H(+). In terms of biological role, catalyzes the attachment of tryptophan to tRNA(Trp). This is Tryptophan--tRNA ligase from Rickettsia typhi (strain ATCC VR-144 / Wilmington).